We begin with the raw amino-acid sequence, 231 residues long: ATP-dependent dethiobiotin synthetase BioD (231 aa).

An ATP-binding site is contributed by 13–18 (DVGKTV). Mg(2+) is bound at residue T17. The active site involves K38. Residues D55, 116–119 (EGAG), and 176–177 (NR) contribute to the ATP site. The Mg(2+) site is built by D55 and E116.

This sequence belongs to the dethiobiotin synthetase family. In terms of assembly, homodimer. Requires Mg(2+) as cofactor.

The protein localises to the cytoplasm. The catalysed reaction is (7R,8S)-7,8-diammoniononanoate + CO2 + ATP = (4R,5S)-dethiobiotin + ADP + phosphate + 3 H(+). Its pathway is cofactor biosynthesis; biotin biosynthesis; biotin from 7,8-diaminononanoate: step 1/2. Catalyzes a mechanistically unusual reaction, the ATP-dependent insertion of CO2 between the N7 and N8 nitrogen atoms of 7,8-diaminopelargonic acid (DAPA, also called 7,8-diammoniononanoate) to form a ureido ring. In Vibrio cholerae serotype O1 (strain ATCC 39315 / El Tor Inaba N16961), this protein is ATP-dependent dethiobiotin synthetase BioD.